The chain runs to 80 residues: NAD(P)H-quinone oxidoreductase subunit O (80 aa).

Belongs to the complex I NdhO subunit family. NDH-1 can be composed of about 15 different subunits; different subcomplexes with different compositions have been identified which probably have different functions.

It is found in the cellular thylakoid membrane. The catalysed reaction is a plastoquinone + NADH + (n+1) H(+)(in) = a plastoquinol + NAD(+) + n H(+)(out). The enzyme catalyses a plastoquinone + NADPH + (n+1) H(+)(in) = a plastoquinol + NADP(+) + n H(+)(out). In terms of biological role, NDH-1 shuttles electrons from an unknown electron donor, via FMN and iron-sulfur (Fe-S) centers, to quinones in the respiratory and/or the photosynthetic chain. The immediate electron acceptor for the enzyme in this species is believed to be plastoquinone. Couples the redox reaction to proton translocation, and thus conserves the redox energy in a proton gradient. Cyanobacterial NDH-1 also plays a role in inorganic carbon-concentration. This is NAD(P)H-quinone oxidoreductase subunit O from Prochlorococcus marinus (strain MIT 9515).